The chain runs to 348 residues: MTSKTRKVAVITGANSNLGLNIAYRLIERQSADVRLTLVVTSRTLPRVREVVELIKKFVATQEDPCSVDFDYLLVDFTNMVSVLNAYYDLNQKYESINYFFVNAAQGVYDGIDWIGAVKQVLSDPLEAVTNPTYRKQLVGVKSKDEMGLVFQANVFGPYYLIQKILPQLSKGKATVVWISSIMADPKHLSLQDIEMIKSDVTYEGSKRVVDLLHLATYKQMKSQGIHQYVVQPGIFTSYSFAKYLNFFTTFGMLFLFYLARLLGSKWHNIDGYKAANAPVYVATLINPHFEHQEVKYGSASSRDGMEYIETTDIDKTGSSDVLAYIEKKKLEWDDKLKDQITNSRIPI.

The NADP(+) site is built by L18, T41, and R47. Active-site proton donor residues include S180 and Y203. NADP(+) is bound by residues Y203, K207, and S238. The Lowers pKa of active site Tyr role is filled by K207.

This sequence belongs to the short-chain dehydrogenases/reductases (SDR) family. ERG27 subfamily.

The catalysed reaction is a 3beta-hydroxysteroid + NADP(+) = a 3-oxosteroid + NADPH + H(+). Its pathway is steroid biosynthesis; zymosterol biosynthesis; zymosterol from lanosterol: step 5/6. Responsible for the reduction of the keto group on the C-3 of sterols. This chain is 3-keto-steroid reductase (ERG27), found in Candida glabrata (strain ATCC 2001 / BCRC 20586 / JCM 3761 / NBRC 0622 / NRRL Y-65 / CBS 138) (Yeast).